The following is a 314-amino-acid chain: Thymidylate synthase (314 aa).

DUMP contacts are provided by residues arginine 21 and 176 to 177 (RR). Residue cysteine 196 is the Nucleophile of the active site. Residues 216–219 (RSAD), asparagine 227, and 257–259 (HLY) contribute to the dUMP site. Aspartate 219 contributes to the (6R)-5,10-methylene-5,6,7,8-tetrahydrofolate binding site. Serine 313 contacts (6R)-5,10-methylene-5,6,7,8-tetrahydrofolate.

The protein belongs to the thymidylate synthase family. Bacterial-type ThyA subfamily. Homodimer.

The protein resides in the cytoplasm. It catalyses the reaction dUMP + (6R)-5,10-methylene-5,6,7,8-tetrahydrofolate = 7,8-dihydrofolate + dTMP. It functions in the pathway pyrimidine metabolism; dTTP biosynthesis. Functionally, catalyzes the reductive methylation of 2'-deoxyuridine-5'-monophosphate (dUMP) to 2'-deoxythymidine-5'-monophosphate (dTMP) while utilizing 5,10-methylenetetrahydrofolate (mTHF) as the methyl donor and reductant in the reaction, yielding dihydrofolate (DHF) as a by-product. This enzymatic reaction provides an intracellular de novo source of dTMP, an essential precursor for DNA biosynthesis. The sequence is that of Thymidylate synthase from Listeria monocytogenes serovar 1/2a (strain ATCC BAA-679 / EGD-e).